We begin with the raw amino-acid sequence, 626 residues long: Chaperone protein HtpG (626 aa).

The tract at residues Met1–Arg339 is a; substrate-binding. Positions Glu340–Lys555 are b. The interval Leu556 to Ser626 is c.

Belongs to the heat shock protein 90 family. Homodimer.

It localises to the cytoplasm. Its function is as follows. Molecular chaperone. Has ATPase activity. This Histophilus somni (strain 129Pt) (Haemophilus somnus) protein is Chaperone protein HtpG.